The following is a 158-amino-acid chain: UPF0311 protein CA_C3321 (158 aa).

Belongs to the UPF0311 family.

This chain is UPF0311 protein CA_C3321, found in Clostridium acetobutylicum (strain ATCC 824 / DSM 792 / JCM 1419 / IAM 19013 / LMG 5710 / NBRC 13948 / NRRL B-527 / VKM B-1787 / 2291 / W).